A 335-amino-acid chain; its full sequence is Olfactory receptor 9K2 (335 aa).

Topologically, residues 1–50 are extracellular; sequence MLGSKPRVHLYILPCASQQVSTMGDRGTSNHSEMTDFILAGFRVRPELHI. A glycan (N-linked (GlcNAc...) asparagine) is linked at Asn-30. A helical transmembrane segment spans residues 51 to 71; the sequence is LLFLLFLFVYAMILLGNVGMM. Over 72–79 the chain is Cytoplasmic; it reads TIIMTDPR. The chain crosses the membrane as a helical span at residues 80 to 100; the sequence is LNTPMYFFLGNLSFIDLFYSS. At 101 to 124 the chain is on the extracellular side; sequence VIEPKAMINFWSENKSISFAGCVA. N-linked (GlcNAc...) asparagine glycosylation is present at Asn-114. The cysteines at positions 122 and 214 are disulfide-linked. The chain crosses the membrane as a helical span at residues 125-145; it reads QLFLFALLIVTEGFLLAAMAY. The Cytoplasmic portion of the chain corresponds to 146–164; the sequence is DRFIAICNPLLYSVQMSTR. Residues 165-185 traverse the membrane as a helical segment; sequence LCTQLVAGSYFCGCISSVIQT. Residues 186–222 lie on the Extracellular side of the membrane; the sequence is SMTFTLSFCASRAVDHFYCDSRPLQRLSCSDLFIHRM. Residues 223 to 242 traverse the membrane as a helical segment; sequence ISFSLSCIIILPTIIVIIVS. At 243–262 the chain is on the cytoplasmic side; sequence YMYIVSTVLKIHSTEGHKKA. A helical membrane pass occupies residues 263–283; it reads FSTCSSHLGVVSVLYGAVFFM. Residues 284 to 296 are Extracellular-facing; it reads YLTPDRFPELSKV. The Cytoplasmic segment spans residues 316–335; the sequence is RNKDVQEALKKFLEKKNIIL.

Belongs to the G-protein coupled receptor 1 family.

It is found in the cell membrane. Functionally, odorant receptor. The polypeptide is Olfactory receptor 9K2 (OR9K2) (Homo sapiens (Human)).